We begin with the raw amino-acid sequence, 96 residues long: UPF0235 protein YPN_3141 (96 aa).

The protein belongs to the UPF0235 family.

This is UPF0235 protein YPN_3141 from Yersinia pestis bv. Antiqua (strain Nepal516).